The sequence spans 677 residues: Methionine--tRNA ligase (677 aa).

The 'HIGH' region motif lies at 15 to 25; it reads PYANGSIHLGH. Zn(2+)-binding residues include Cys-146, Cys-149, Cys-159, and Cys-162. The 'KMSKS' region motif lies at 333-337; the sequence is KMSKS. Residue Lys-336 participates in ATP binding. The tRNA-binding domain occupies 575–677; the sequence is DFAKVDLRVA…DGAKPGQQVK (103 aa).

It belongs to the class-I aminoacyl-tRNA synthetase family. MetG type 1 subfamily. Homodimer. It depends on Zn(2+) as a cofactor.

Its subcellular location is the cytoplasm. The catalysed reaction is tRNA(Met) + L-methionine + ATP = L-methionyl-tRNA(Met) + AMP + diphosphate. In terms of biological role, is required not only for elongation of protein synthesis but also for the initiation of all mRNA translation through initiator tRNA(fMet) aminoacylation. In Salmonella schwarzengrund (strain CVM19633), this protein is Methionine--tRNA ligase.